The primary structure comprises 422 residues: G-protein coupled receptor 83 (422 aa).

An N-terminal signal peptide occupies residues 1–16 (MGRRGALLCLLPLLRA). The Extracellular portion of the chain corresponds to 17–70 (AERPEGRADEPGLEAALAGPNASHFFWSNYSFSDWQNFVGRRRYGAESQNPTVK). N-linked (GlcNAc...) asparagine glycosylation is found at asparagine 37 and asparagine 45. Residues 71–91 (ALLVVAYSFIIVFSLFGNVLV) traverse the membrane as a helical segment. Residues 92–106 (CHVIFKNQRMRSATS) lie on the Cytoplasmic side of the membrane. A helical transmembrane segment spans residues 107–128 (LFIVNLAVADILITLLNTPFTL). The Extracellular portion of the chain corresponds to 129–144 (VRFVNSTWVFGKGMCH). N-linked (GlcNAc...) asparagine glycosylation occurs at asparagine 133. The helical transmembrane segment at 145–166 (VSRFAQYCSLHVSALTLTAIAV) threads the bilayer. Topologically, residues 167–185 (DRHQVIMHPLKPRISITKG) are cytoplasmic. Residues 186-207 (VIYITVIWTMATFFSLPHAICQ) traverse the membrane as a helical segment. Residues 208–237 (KLFTFKYSEDIVRSLCLPDFPEPADLFWKY) lie on the Extracellular side of the membrane. Residues 238–259 (LDLATFILLYILPLLIISVAYA) traverse the membrane as a helical segment. Residues 260–292 (RVAKKLWLCNTIGDVTTEQYLALRRKKKKTIKM) lie on the Cytoplasmic side of the membrane. Residues 293–314 (LMLVVVLFALCWFPLNCYVLLL) form a helical membrane-spanning segment. At 315-326 (SSKVIHTNNALY) the chain is on the extracellular side. Residues 327–347 (FAFHWFAMSSTCYNPFIYCWL) traverse the membrane as a helical segment. Residues 348–422 (NENFRIELKA…SSVEPIVAMS (75 aa)) lie on the Cytoplasmic side of the membrane.

It belongs to the G-protein coupled receptor 1 family.

The protein localises to the cell membrane. Its function is as follows. G-protein coupled receptor for PEN, a neuropeptide produced from the precursor protein, proSAAS (encoded by PCSK1N). Acts through a G(i)- and G(q)-alpha-alpha-mediated pathway in response to PEN. Plays a role in food intake and body weight regulation. May contribute to the regulation of anxiety-related behaviors. The chain is G-protein coupled receptor 83 (GPR83) from Canis lupus familiaris (Dog).